The sequence spans 145 residues: D-aminoacyl-tRNA deacylase (145 aa).

The Gly-cisPro motif, important for rejection of L-amino acids signature appears at 137–138; that stretch reads GP.

This sequence belongs to the DTD family. As to quaternary structure, homodimer.

The protein localises to the cytoplasm. The catalysed reaction is glycyl-tRNA(Ala) + H2O = tRNA(Ala) + glycine + H(+). The enzyme catalyses a D-aminoacyl-tRNA + H2O = a tRNA + a D-alpha-amino acid + H(+). Functionally, an aminoacyl-tRNA editing enzyme that deacylates mischarged D-aminoacyl-tRNAs. Also deacylates mischarged glycyl-tRNA(Ala), protecting cells against glycine mischarging by AlaRS. Acts via tRNA-based rather than protein-based catalysis; rejects L-amino acids rather than detecting D-amino acids in the active site. By recycling D-aminoacyl-tRNA to D-amino acids and free tRNA molecules, this enzyme counteracts the toxicity associated with the formation of D-aminoacyl-tRNA entities in vivo and helps enforce protein L-homochirality. This chain is D-aminoacyl-tRNA deacylase, found in Shewanella sp. (strain MR-4).